The chain runs to 397 residues: Tryptophan synthase beta chain (397 aa).

Lys87 carries the post-translational modification N6-(pyridoxal phosphate)lysine.

The protein belongs to the TrpB family. In terms of assembly, tetramer of two alpha and two beta chains. The cofactor is pyridoxal 5'-phosphate.

The enzyme catalyses (1S,2R)-1-C-(indol-3-yl)glycerol 3-phosphate + L-serine = D-glyceraldehyde 3-phosphate + L-tryptophan + H2O. It participates in amino-acid biosynthesis; L-tryptophan biosynthesis; L-tryptophan from chorismate: step 5/5. Its function is as follows. The beta subunit is responsible for the synthesis of L-tryptophan from indole and L-serine. The polypeptide is Tryptophan synthase beta chain (Cronobacter sakazakii (strain ATCC BAA-894) (Enterobacter sakazakii)).